The following is a 135-amino-acid chain: L-ectoine synthase (135 aa).

This sequence belongs to the ectoine synthase family.

It carries out the reaction (2S)-4-acetamido-2-aminobutanoate = L-ectoine + H2O. Its pathway is amine and polyamine biosynthesis; ectoine biosynthesis; L-ectoine from L-aspartate 4-semialdehyde: step 3/3. In terms of biological role, catalyzes the circularization of gamma-N-acetyl-alpha,gamma-diaminobutyric acid (ADABA) to ectoine (1,4,5,6-tetrahydro-2-methyl-4-pyrimidine carboxylic acid), which is an excellent osmoprotectant. This Saccharopolyspora erythraea (strain ATCC 11635 / DSM 40517 / JCM 4748 / NBRC 13426 / NCIMB 8594 / NRRL 2338) protein is L-ectoine synthase.